We begin with the raw amino-acid sequence, 151 residues long: Small ribosomal subunit protein uS15 (151 aa).

N6-acetyllysine; alternate is present on Lys-27. Lys-27 is subject to N6-succinyllysine; alternate. A Glycyl lysine isopeptide (Lys-Gly) (interchain with G-Cter in ubiquitin) cross-link involves residue Lys-27. Position 30 is a phosphoserine (Ser-30). At Lys-34 the chain carries N6-succinyllysine. Tyr-38 is subject to Phosphotyrosine. Residue Lys-43 forms a Glycyl lysine isopeptide (Lys-Gly) (interchain with G-Cter in SUMO2) linkage.

Belongs to the universal ribosomal protein uS15 family. In terms of assembly, component of the small ribosomal subunit. Part of the small subunit (SSU) processome, composed of more than 70 proteins and the RNA chaperone small nucleolar RNA (snoRNA) U3. Ubiquitinated at Lys-27 by RNF14 and RNF25 in response to ribosome collisions (ribosome stalling).

It is found in the cytoplasm. It localises to the nucleus. The protein localises to the nucleolus. Functionally, component of the small ribosomal subunit. The ribosome is a large ribonucleoprotein complex responsible for the synthesis of proteins in the cell. Part of the small subunit (SSU) processome, first precursor of the small eukaryotic ribosomal subunit. During the assembly of the SSU processome in the nucleolus, many ribosome biogenesis factors, an RNA chaperone and ribosomal proteins associate with the nascent pre-rRNA and work in concert to generate RNA folding, modifications, rearrangements and cleavage as well as targeted degradation of pre-ribosomal RNA by the RNA exosome. The chain is Small ribosomal subunit protein uS15 (RPS13) from Cricetulus griseus (Chinese hamster).